A 276-amino-acid polypeptide reads, in one-letter code: Extracellular metalloprotease VDBG_07883 (276 aa).

A signal peptide spans 1 to 17; it reads MQSKFLWIAAASAATAA. N-linked (GlcNAc...) asparagine glycosylation is found at Asn70 and Asn102. Residue His191 coordinates Zn(2+). Glu192 is an active-site residue. A Zn(2+)-binding site is contributed by His195. Residue Asn222 is glycosylated (N-linked (GlcNAc...) asparagine). Cysteines 227 and 254 form a disulfide.

Belongs to the peptidase M43B family.

The protein localises to the secreted. Its function is as follows. Secreted metalloproteinase that allows assimilation of proteinaceous substrates. This Verticillium alfalfae (strain VaMs.102 / ATCC MYA-4576 / FGSC 10136) (Verticillium wilt of alfalfa) protein is Extracellular metalloprotease VDBG_07883.